The sequence spans 202 residues: Pyridoxal 5'-phosphate synthase subunit PdxT (202 aa).

52–54 provides a ligand contact to L-glutamine; that stretch reads GES. The active-site Nucleophile is the Cys84. L-glutamine-binding positions include Arg120 and 148 to 149; that span reads IR. Active-site charge relay system residues include His185 and Glu187.

This sequence belongs to the glutaminase PdxT/SNO family. As to quaternary structure, in the presence of PdxS, forms a dodecamer of heterodimers. Only shows activity in the heterodimer.

It catalyses the reaction aldehydo-D-ribose 5-phosphate + D-glyceraldehyde 3-phosphate + L-glutamine = pyridoxal 5'-phosphate + L-glutamate + phosphate + 3 H2O + H(+). It carries out the reaction L-glutamine + H2O = L-glutamate + NH4(+). Its pathway is cofactor biosynthesis; pyridoxal 5'-phosphate biosynthesis. Functionally, catalyzes the hydrolysis of glutamine to glutamate and ammonia as part of the biosynthesis of pyridoxal 5'-phosphate. The resulting ammonia molecule is channeled to the active site of PdxS. The chain is Pyridoxal 5'-phosphate synthase subunit PdxT from Methanopyrus kandleri (strain AV19 / DSM 6324 / JCM 9639 / NBRC 100938).